Here is a 130-residue protein sequence, read N- to C-terminus: Chorion class B protein PC10 (130 aa).

Residues 1–22 (GAWNGRLGCGCGGIAPAAELAA) form a left arm region. The central domain stretch occupies residues 23-93 (SYGGGLGVAS…GNGALGITAE (71 aa)). The interval 94–130 (RGYGAGIGYEGLGLGYGAGIGYKGYGLGGCGCGCGRL) is right arm (Gly-rich tandem repeats).

Belongs to the chorion protein family.

Its function is as follows. This protein is one of many from the eggshell of the silk moth. This is Chorion class B protein PC10 from Antheraea polyphemus (Polyphemus moth).